We begin with the raw amino-acid sequence, 215 residues long: Cytochrome b6 (215 aa).

Residues 32-52 (IFYCIGGITFTCFLVQVATGF) traverse the membrane as a helical segment. Cysteine 35 lines the heme c pocket. Heme b is bound by residues histidine 86 and histidine 100. A run of 3 helical transmembrane segments spans residues 90–110 (ASMM…TGGF), 116–136 (LTWV…VTGY), and 186–206 (LHTF…FLMI). 2 residues coordinate heme b: histidine 187 and histidine 202.

Belongs to the cytochrome b family. PetB subfamily. In terms of assembly, the 4 large subunits of the cytochrome b6-f complex are cytochrome b6, subunit IV (17 kDa polypeptide, PetD), cytochrome f and the Rieske protein, while the 4 small subunits are PetG, PetL, PetM and PetN. The complex functions as a dimer. The cofactor is heme b. It depends on heme c as a cofactor.

It localises to the plastid. The protein resides in the chloroplast thylakoid membrane. In terms of biological role, component of the cytochrome b6-f complex, which mediates electron transfer between photosystem II (PSII) and photosystem I (PSI), cyclic electron flow around PSI, and state transitions. The polypeptide is Cytochrome b6 (Chlorella vulgaris (Green alga)).